Consider the following 242-residue polypeptide: Uridylate kinase (242 aa).

12–15 (KLSG) is a binding site for ATP. Positions 20–25 (GQKGYG) are involved in allosteric activation by GTP. Residue Gly-54 participates in UMP binding. Residues Gly-55 and Arg-59 each contribute to the ATP site. UMP is bound by residues Asp-74 and 135-142 (TGNPYFST). The ATP site is built by Gln-163, Tyr-168, and Asp-171.

It belongs to the UMP kinase family. In terms of assembly, homohexamer.

It is found in the cytoplasm. The catalysed reaction is UMP + ATP = UDP + ADP. It participates in pyrimidine metabolism; CTP biosynthesis via de novo pathway; UDP from UMP (UMPK route): step 1/1. Its activity is regulated as follows. Allosterically activated by GTP. Inhibited by UTP. In terms of biological role, catalyzes the reversible phosphorylation of UMP to UDP. This is Uridylate kinase from Desulforamulus reducens (strain ATCC BAA-1160 / DSM 100696 / MI-1) (Desulfotomaculum reducens).